The chain runs to 567 residues: Mitogen-activated protein kinase 16 (567 aa).

A Protein kinase domain is found at 25–316 (YRIEEVIGKG…AEEALADVYF (292 aa)). Residues 31 to 39 (IGKGSYGVV) and K54 each bind ATP. D151 serves as the catalytic Proton acceptor. Phosphothreonine is present on T187. A TXY motif is present at residues 187–189 (TDY). Y189 bears the Phosphotyrosine mark. T192 bears the Phosphothreonine mark. Disordered regions lie at residues 428–455 (AQQS…ADRN) and 512–567 (PAAA…SRWY). The segment covering 443 to 453 (SIRDERPRGAD) has biased composition (basic and acidic residues). Polar residues predominate over residues 545 to 567 (KPNTQYIPQKVSAAQDTAMSRWY).

The protein belongs to the protein kinase superfamily. CMGC Ser/Thr protein kinase family. MAP kinase subfamily. In terms of processing, dually phosphorylated on Thr-187 and Tyr-189, which activates the enzyme.

The catalysed reaction is L-seryl-[protein] + ATP = O-phospho-L-seryl-[protein] + ADP + H(+). The enzyme catalyses L-threonyl-[protein] + ATP = O-phospho-L-threonyl-[protein] + ADP + H(+). Its activity is regulated as follows. Activated by threonine and tyrosine phosphorylation. This Arabidopsis thaliana (Mouse-ear cress) protein is Mitogen-activated protein kinase 16 (MPK16).